The sequence spans 423 residues: 3-phosphoshikimate 1-carboxyvinyltransferase (423 aa).

3-phosphoshikimate-binding residues include lysine 19, serine 20, and arginine 24. Lysine 19 contacts phosphoenolpyruvate. 2 residues coordinate phosphoenolpyruvate: glycine 89 and arginine 118. Residues serine 164, serine 165, glutamine 166, serine 192, aspartate 304, and lysine 331 each contribute to the 3-phosphoshikimate site. Residue glutamine 166 participates in phosphoenolpyruvate binding. Aspartate 304 acts as the Proton acceptor in catalysis. Phosphoenolpyruvate-binding residues include arginine 335 and arginine 377.

Belongs to the EPSP synthase family. Monomer.

It is found in the cytoplasm. The catalysed reaction is 3-phosphoshikimate + phosphoenolpyruvate = 5-O-(1-carboxyvinyl)-3-phosphoshikimate + phosphate. The protein operates within metabolic intermediate biosynthesis; chorismate biosynthesis. Functionally, catalyzes the transfer of the enolpyruvyl moiety of phosphoenolpyruvate (PEP) to the 5-hydroxyl of shikimate-3-phosphate (S3P) to produce enolpyruvyl shikimate-3-phosphate and inorganic phosphate. This chain is 3-phosphoshikimate 1-carboxyvinyltransferase, found in Korarchaeum cryptofilum (strain OPF8).